The sequence spans 666 residues: Transketolase (666 aa).

Position 28 (His-28) interacts with substrate. Residues His-68 and 116–118 each bind thiamine diphosphate; that span reads GPL. Asp-157 serves as a coordination point for Mg(2+). Gly-158 and Asn-187 together coordinate thiamine diphosphate. Mg(2+) is bound by residues Asn-187 and Ile-189. His-262, Arg-356, and Ser-383 together coordinate substrate. Thiamine diphosphate is bound at residue His-262. Glu-410 (proton donor) is an active-site residue. Residue Phe-436 coordinates thiamine diphosphate. Residues His-460, Asp-468, and Arg-519 each contribute to the substrate site.

Belongs to the transketolase family. Homodimer. Mg(2+) is required as a cofactor. Ca(2+) serves as cofactor. The cofactor is Mn(2+). It depends on Co(2+) as a cofactor. Requires thiamine diphosphate as cofactor.

The enzyme catalyses D-sedoheptulose 7-phosphate + D-glyceraldehyde 3-phosphate = aldehydo-D-ribose 5-phosphate + D-xylulose 5-phosphate. Catalyzes the transfer of a two-carbon ketol group from a ketose donor to an aldose acceptor, via a covalent intermediate with the cofactor thiamine pyrophosphate. This Halalkalibacterium halodurans (strain ATCC BAA-125 / DSM 18197 / FERM 7344 / JCM 9153 / C-125) (Bacillus halodurans) protein is Transketolase (tkt).